Consider the following 208-residue polypeptide: MKIVEVKHPLVKHKLGLMREGDISTKRFRELATEVASLLTYEATSDFETEKVTIEGWNGPVQVDQIKGKKVTVVPILRAGLGMMDGVLEHIPSARISVVGIYRDEETLEPVPYFNKLATNIEERIAMVVDPMLATGGSMIATIDLLKEKGCNQIKVLVLVAAPEGIAALEKAHPDVELYTAAIDEKLNDKGYIVPGLGDAGDKIFGTK.

5-phospho-alpha-D-ribose 1-diphosphate-binding positions include arginine 78, arginine 103, and 130–138 (DPMLATGGS). Uracil contacts are provided by residues isoleucine 193 and 198-200 (GDA). Aspartate 199 contributes to the 5-phospho-alpha-D-ribose 1-diphosphate binding site.

It belongs to the UPRTase family. Mg(2+) is required as a cofactor.

The catalysed reaction is UMP + diphosphate = 5-phospho-alpha-D-ribose 1-diphosphate + uracil. The protein operates within pyrimidine metabolism; UMP biosynthesis via salvage pathway; UMP from uracil: step 1/1. With respect to regulation, allosterically activated by GTP. Its function is as follows. Catalyzes the conversion of uracil and 5-phospho-alpha-D-ribose 1-diphosphate (PRPP) to UMP and diphosphate. The polypeptide is Uracil phosphoribosyltransferase (Vibrio cholerae serotype O1 (strain ATCC 39541 / Classical Ogawa 395 / O395)).